The chain runs to 224 residues: Heme response regulator HssR (224 aa).

In terms of domain architecture, Response regulatory spans 3–116; the sequence is QCLVVDDDPR…ELIFRIRAVL (114 aa). Asp-52 is subject to 4-aspartylphosphate. The segment at residues 124-222 is a DNA-binding region (ompR/PhoB-type); it reads NSEMTIGNLT…VRGQGYKVEN (99 aa).

In terms of processing, phosphorylated by HssS.

The protein resides in the cytoplasm. Member of the two-component regulatory system HssS/HssR involved in intracellular heme homeostasis and tempering of staphylococcal virulence. Phosphorylated HssR binds to a direct repeat sequence within hrtAB promoter and activates the expression of hrtAB, an efflux pump, in response to extracellular heme, hemin, hemoglobin or blood. This chain is Heme response regulator HssR (hssR), found in Staphylococcus aureus (strain Mu50 / ATCC 700699).